The chain runs to 281 residues: Elongation factor 1-delta (281 aa).

N-acetylalanine is present on Ala-2. At Lys-17 the chain carries N6-acetyllysine. Ser-37, Ser-44, Ser-60, Ser-86, and Ser-106 each carry phosphoserine. The interval 80 to 115 (LIVRIASLEVENQNLRGVVQDLQQAISKLEVRLSTL) is leucine-zipper. N6-acetyllysine is present on Lys-107. The segment covering 115–132 (LEKSSPTHRATAPQTQHV) has biased composition (polar residues). Positions 115 to 172 (LEKSSPTHRATAPQTQHVSPMRQVEPPAKKGATPAEDDEDNDIDLFGSDEEEEDKEAA) are disordered. Lys-117 carries the post-translational modification N6-acetyllysine; alternate. Residue Lys-117 is modified to N6-succinyllysine; alternate. A Phosphoserine modification is found at Ser-119. Position 129 is a phosphothreonine (Thr-129). Residue Ser-133 is modified to Phosphoserine. Thr-147 carries the post-translational modification Phosphothreonine. A compositionally biased stretch (acidic residues) spans 149 to 169 (AEDDEDNDIDLFGSDEEEEDK). Residue Ser-162 is modified to Phosphoserine; by CK2. The interval 173 to 281 (RLREERLRQY…SVDIAAFNKI (109 aa)) is catalytic (GEF).

This sequence belongs to the EF-1-beta/EF-1-delta family. EF-1 is composed of 4 subunits: alpha, beta, delta isoform 1, and gamma. Isoform 2 interacts with HSF1 and NFE2L2.

Its subcellular location is the nucleus. Functionally, EF-1-beta and EF-1-delta stimulate the exchange of GDP bound to EF-1-alpha to GTP, regenerating EF-1-alpha for another round of transfer of aminoacyl-tRNAs to the ribosome. Regulates induction of heat-shock-responsive genes through association with heat shock transcription factors and direct DNA-binding at heat shock promoter elements (HSE). The protein is Elongation factor 1-delta (Eef1d) of Rattus norvegicus (Rat).